We begin with the raw amino-acid sequence, 182 residues long: Peptidyl-prolyl cis-trans isomerase H (182 aa).

One can recognise a PPIase cyclophilin-type domain in the interval 15 to 181 (FFDITLGGEP…LDVVIAQCGE (167 aa)).

Belongs to the cyclophilin-type PPIase family. PPIase H subfamily.

It is found in the nucleus. The enzyme catalyses [protein]-peptidylproline (omega=180) = [protein]-peptidylproline (omega=0). In terms of biological role, PPIases accelerate the folding of proteins. It catalyzes the cis-trans isomerization of proline imidic peptide bonds in oligopeptides. The protein is Peptidyl-prolyl cis-trans isomerase H (cyp-3) of Neurospora crassa (strain ATCC 24698 / 74-OR23-1A / CBS 708.71 / DSM 1257 / FGSC 987).